Reading from the N-terminus, the 1392-residue chain is FERM and PDZ domain-containing protein 2 (1392 aa).

A KIND domain is found at 15–197 (VTLASALQVR…SEVERRVVEE (183 aa)). A disordered region spans residues 211–246 (SRLHQADGESPGAPASDALQPRRVSERSAETQSSLE). The FERM domain maps to 342–642 (CVVLLNGRCL…WFNAQTGSKH (301 aa)). The 87-residue stretch at 775–861 (GLFGEPNQDI…MAVRMIQNSP (87 aa)) folds into the PDZ 1 domain. A disordered region spans residues 903–930 (GRQSPHIHDQDRSVRGTEMAQGAGSCPP). Positions 908 to 917 (HIHDQDRSVR) are enriched in basic and acidic residues. Positions 937 to 1027 (TGEIYFVELV…VARLVLERRG (91 aa)) are interaction with GRIN2A and GRIN2B. PDZ domains lie at 950 to 1035 (GTLG…PQCP) and 1079 to 1167 (RGLG…PEME). The segment at 1186–1236 (CAGSEQSPSLDQEDNWRDSTSLDAGEGLSPGPESSYKDVRQVKGDREKERP) is disordered. Residues 1220 to 1236 (SYKDVRQVKGDREKERP) show a composition bias toward basic and acidic residues.

Interacts (via the second PDZ domain) with CTNND2 (via the extreme C-terminus). Interacts (via the second PDZ domain) with PKP4 (via the extreme C-terminus); the interaction directs FRMPD2 to the basolateral membranes. Interacts (via the second PDZ domain) with ARVCF (via the extreme C-terminus). Interacts (via the second PDZ domain) with NMDAR subunits GRIN2A/GLUN2A and GRIN2B/GLUN2B (via the extreme C-terminus); the interaction is direct and is likely to promote NMDAR-mediated neural signal transmission. Binds GRIN2A with lower affinity than GRIN2B. Interacts (via the third PDZ domain) with LRIT1 (via the extreme C-terminus); the interaction leads to their colocalization in photoreceptor synapses. Interacts with NOD2; the interaction is likely to trigger NOD2-mediated nuclear factor kappaB activation.

The protein resides in the cytoplasm. Its subcellular location is the postsynaptic density. It is found in the basolateral cell membrane. The protein localises to the cell junction. It localises to the tight junction. Functions as a scaffold protein and likely plays a role in N-methyl-D-aspartic acid receptor (NMDAR)-mediated synaptic excitatory transmission. May be involved in synapse formation in cone photoreceptor cells. May play a role in the regulation of tight junction formation. Binds phosphatidylinositol 3,4-bisphosphate (PtdIns(3,4)P2). May pNF-kappa-Blay a role in the regulation of NOD2-mediated NF-kappa-B activation in immune response. The sequence is that of FERM and PDZ domain-containing protein 2 from Mus musculus (Mouse).